The sequence spans 388 residues: LL-diaminopimelate aminotransferase (388 aa).

Substrate is bound by residues Tyr13, Gly38, Lys102, Tyr126, and Asn176. Pyridoxal 5'-phosphate is bound by residues 101-102 (SK), Tyr126, Asn176, Tyr207, and 235-237 (SLS). Position 238 is an N6-(pyridoxal phosphate)lysine (Lys238). Position 246 (Arg246) interacts with pyridoxal 5'-phosphate. Arg364 provides a ligand contact to substrate.

Belongs to the class-I pyridoxal-phosphate-dependent aminotransferase family. LL-diaminopimelate aminotransferase subfamily. As to quaternary structure, homodimer. Pyridoxal 5'-phosphate serves as cofactor.

The catalysed reaction is (2S,6S)-2,6-diaminopimelate + 2-oxoglutarate = (S)-2,3,4,5-tetrahydrodipicolinate + L-glutamate + H2O + H(+). It functions in the pathway amino-acid biosynthesis; L-lysine biosynthesis via DAP pathway; LL-2,6-diaminopimelate from (S)-tetrahydrodipicolinate (aminotransferase route): step 1/1. In terms of biological role, involved in the synthesis of meso-diaminopimelate (m-DAP or DL-DAP), required for both lysine and peptidoglycan biosynthesis. Catalyzes the direct conversion of tetrahydrodipicolinate to LL-diaminopimelate. The chain is LL-diaminopimelate aminotransferase from Dehalococcoides mccartyi (strain ATCC BAA-2100 / JCM 16839 / KCTC 5957 / BAV1).